The following is a 201-amino-acid chain: Pyrrolidone-carboxylate peptidase (201 aa).

Active-site residues include Glu78, Cys141, and His165.

Belongs to the peptidase C15 family. Homotetramer.

It is found in the cytoplasm. The catalysed reaction is Release of an N-terminal pyroglutamyl group from a polypeptide, the second amino acid generally not being Pro.. Its function is as follows. Removes 5-oxoproline from various penultimate amino acid residues except L-proline. This is Pyrrolidone-carboxylate peptidase from Brachyspira hyodysenteriae (strain ATCC 49526 / WA1).